The chain runs to 529 residues: Delayed-rectifier potassium channel regulatory subunit KCNS1 (529 aa).

The Cytoplasmic portion of the chain corresponds to 1–217; the sequence is MLMLLVRGTH…LTMENPGYSL (217 aa). The chain crosses the membrane as a helical span at residues 218 to 239; the sequence is PSKLFSCVSIGVVLASIAAMCI. Over 240–270 the chain is Extracellular; the sequence is HSLPEYQAREAAAAVATVAAGRSAEDVRDDP. A helical membrane pass occupies residues 271-293; the sequence is VLRRLEYFCIAWFSFEVSSRLLL. Residues 294–304 lie on the Cytoplasmic side of the membrane; that stretch reads APSTRNFFCHP. Residues 305 to 322 form a helical membrane-spanning segment; the sequence is LNLIDIVSVLPFYLTLLA. The Extracellular segment spans residues 323–342; the sequence is SVALGGNNHGGTSGEELGHL. Residues 343 to 363 traverse the membrane as a helical; Voltage-sensor segment; that stretch reads GKVVQVFRLMRIFRVLKLARH. Residues 364 to 378 are Cytoplasmic-facing; sequence STGLRSLGATLKHSY. The helical transmembrane segment at 379-400 threads the bilayer; that stretch reads REVGILLLYLAVGVSVFSGVAY. The Extracellular segment spans residues 401–413; sequence TAEKEEDVGFDTI. The helical intramembrane region spans 414 to 425; it reads PACWWWGTVSMT. The Selectivity filter motif lies at 426-431; it reads TVGYGD. The stretch at 426 to 433 is an intramembrane region; that stretch reads TVGYGDVV. Over 434–440 the chain is Extracellular; that stretch reads PVTLAGK. Residues 441 to 469 form a helical membrane-spanning segment; it reads LAASGCILGGILVVALPITIIFNKFSHFY. Residues 470–529 lie on the Cytoplasmic side of the membrane; sequence QRQKALEAAVRNSGHREFEDLLSSVDGVSDASLETSRETSQEGRSADLEAPSESPKPQIY. The interval 498–529 is disordered; that stretch reads SDASLETSRETSQEGRSADLEAPSESPKPQIY. A compositionally biased stretch (basic and acidic residues) spans 504–516; it reads TSRETSQEGRSAD.

This sequence belongs to the potassium channel family. S (TC 1.A.1.2) subfamily. Kv9.1/KCNS1 sub-subfamily. Heterotetramer with KCNB1. Heterotetramer with KCNB2. Does not form homomultimers.

The protein resides in the cell membrane. Potassium channel regulatory subunit that modulate the delayed rectifier voltage-gated potassium channel activity of KCNB1 and KCNB2 by altering their kinetics, expression levels, and shifting the half-inactivation potential to more polarized values. While it does not form functional channels on its own, it can form functional heterotetrameric channels with KCNB1 and KCNB2. Each regulatory subunit has unique regulatory properties that can lead to extensive inhibition, significant changes in kinetics, and/or substantial shifts in the voltage dependencies of the inactivation process. The polypeptide is Delayed-rectifier potassium channel regulatory subunit KCNS1 (Lemur catta (Ring-tailed lemur)).